The primary structure comprises 96 residues: Phosphoribosyl-ATP pyrophosphatase (96 aa).

The protein belongs to the PRA-PH family.

Its subcellular location is the cytoplasm. The catalysed reaction is 1-(5-phospho-beta-D-ribosyl)-ATP + H2O = 1-(5-phospho-beta-D-ribosyl)-5'-AMP + diphosphate + H(+). Its pathway is amino-acid biosynthesis; L-histidine biosynthesis; L-histidine from 5-phospho-alpha-D-ribose 1-diphosphate: step 2/9. This is Phosphoribosyl-ATP pyrophosphatase from Methanococcus maripaludis (strain C6 / ATCC BAA-1332).